The primary structure comprises 932 residues: Isoleucine--tRNA ligase (932 aa).

The short motif at 57–67 is the 'HIGH' region element; sequence PYANGDIHIGT. Position 559 (E559) interacts with L-isoleucyl-5'-AMP. The short motif at 600-604 is the 'KMSKS' region element; it reads KMSKS. K603 serves as a coordination point for ATP. The Zn(2+) site is built by C899, C902, C919, and C922.

The protein belongs to the class-I aminoacyl-tRNA synthetase family. IleS type 1 subfamily. In terms of assembly, monomer. It depends on Zn(2+) as a cofactor.

It localises to the cytoplasm. It catalyses the reaction tRNA(Ile) + L-isoleucine + ATP = L-isoleucyl-tRNA(Ile) + AMP + diphosphate. In terms of biological role, catalyzes the attachment of isoleucine to tRNA(Ile). As IleRS can inadvertently accommodate and process structurally similar amino acids such as valine, to avoid such errors it has two additional distinct tRNA(Ile)-dependent editing activities. One activity is designated as 'pretransfer' editing and involves the hydrolysis of activated Val-AMP. The other activity is designated 'posttransfer' editing and involves deacylation of mischarged Val-tRNA(Ile). In Caldanaerobacter subterraneus subsp. tengcongensis (strain DSM 15242 / JCM 11007 / NBRC 100824 / MB4) (Thermoanaerobacter tengcongensis), this protein is Isoleucine--tRNA ligase.